Consider the following 84-residue polypeptide: Putative defensin-like protein 38 (84 aa).

The N-terminal stretch at 1-26 is a signal peptide; that stretch reads MASSKNGTVLFVSLMILLLISTGVKA. Cystine bridges form between Cys28–Cys84, Cys41–Cys65, Cys50–Cys76, and Cys54–Cys78.

It belongs to the DEFL family.

It is found in the secreted. This Arabidopsis thaliana (Mouse-ear cress) protein is Putative defensin-like protein 38.